The primary structure comprises 345 residues: Phosphoribosylformylglycinamidine cyclo-ligase (345 aa).

It belongs to the AIR synthase family.

The protein resides in the cytoplasm. The enzyme catalyses 2-formamido-N(1)-(5-O-phospho-beta-D-ribosyl)acetamidine + ATP = 5-amino-1-(5-phospho-beta-D-ribosyl)imidazole + ADP + phosphate + H(+). Its pathway is purine metabolism; IMP biosynthesis via de novo pathway; 5-amino-1-(5-phospho-D-ribosyl)imidazole from N(2)-formyl-N(1)-(5-phospho-D-ribosyl)glycinamide: step 2/2. The chain is Phosphoribosylformylglycinamidine cyclo-ligase from Shewanella woodyi (strain ATCC 51908 / MS32).